An 87-amino-acid chain; its full sequence is Large ribosomal subunit protein bL31B (87 aa).

It belongs to the bacterial ribosomal protein bL31 family. Type B subfamily. In terms of assembly, part of the 50S ribosomal subunit.

This is Large ribosomal subunit protein bL31B from Burkholderia multivorans (strain ATCC 17616 / 249).